The chain runs to 71 residues: Ribosome modulation factor (71 aa).

It belongs to the ribosome modulation factor family.

The protein localises to the cytoplasm. During stationary phase, converts 70S ribosomes to an inactive dimeric form (100S ribosomes). This is Ribosome modulation factor from Pseudomonas savastanoi pv. phaseolicola (strain 1448A / Race 6) (Pseudomonas syringae pv. phaseolicola (strain 1448A / Race 6)).